The chain runs to 229 residues: Potassium/proton antiporter CemA (229 aa).

Helical transmembrane passes span 7–27 (FTPLPYLASIVFLPWWISFSF), 114–134 (IISFAILSGYSILGNEELVVL), 154–174 (ILLLTDLCIGFHSPHGWELMI), and 189–209 (IISGLVSTFPVILDTIFKYWI).

The protein belongs to the CemA family.

It is found in the plastid. The protein resides in the chloroplast inner membrane. The catalysed reaction is K(+)(in) + H(+)(out) = K(+)(out) + H(+)(in). In terms of biological role, contributes to K(+)/H(+) antiport activity by supporting proton efflux to control proton extrusion and homeostasis in chloroplasts in a light-dependent manner to modulate photosynthesis. Prevents excessive induction of non-photochemical quenching (NPQ) under continuous-light conditions. Indirectly promotes efficient inorganic carbon uptake into chloroplasts. This chain is Potassium/proton antiporter CemA, found in Nandina domestica (Heavenly bamboo).